Reading from the N-terminus, the 54-residue chain is Large ribosomal subunit protein uL15 (54 aa).

The span at 1 to 30 (MPSRLRXTRKLRGHVSHGHGRIGKHRKHPG) shows a compositional bias: basic residues. A disordered region spans residues 1 to 42 (MPSRLRXTRKLRGHVSHGHGRIGKHRKHPGGRGNAGGMHHHR). His-39 bears the (3S)-3-hydroxyhistidine mark. The residue at position 47 (Lys-47) is an N6-acetyllysine.

Belongs to the universal ribosomal protein uL15 family. In terms of assembly, component of the large ribosomal subunit. In terms of processing, hydroxylated on His-39 by MINA.

It localises to the cytoplasm. Component of the large ribosomal subunit. The ribosome is a large ribonucleoprotein complex responsible for the synthesis of proteins in the cell. This is Large ribosomal subunit protein uL15 (RPL27A) from Sus scrofa (Pig).